Consider the following 490-residue polypeptide: Tryptophan decarboxylase (490 aa).

An N6-(pyridoxal phosphate)lysine modification is found at K306.

Belongs to the group II decarboxylase family. As to quaternary structure, homodimer. Pyridoxal 5'-phosphate serves as cofactor.

Its subcellular location is the cytoplasm. It carries out the reaction L-tryptophan + H(+) = tryptamine + CO2. Inhibited by (S)-alpha-fluoromethyltryptophan. Its function is as follows. Catalyzes the decarboxylation of tryptophan to tryptamine. Tryptamine is a neurotransmitter that induces the release of serotonin, which is suggested to modulate gastrointestinal motility. Therefore, the tryptophan decarboxylase from the gut bacteria Ruminococcus gnavus (strain ATCC 29149 / VPI C7-9) may influence host brain and behavior. Has weak activity with tyrosine and phenylalanine. The chain is Tryptophan decarboxylase from Mediterraneibacter gnavus (strain ATCC 29149 / DSM 114966 / JCM 6515 / VPI C7-9) (Ruminococcus gnavus).